Here is a 261-residue protein sequence, read N- to C-terminus: Precorrin-6A synthase [deacetylating] (261 aa).

It catalyses the reaction precorrin-5 + S-adenosyl-L-methionine + H2O = precorrin-6A + acetate + S-adenosyl-L-homocysteine + 2 H(+). It functions in the pathway cofactor biosynthesis; adenosylcobalamin biosynthesis; cob(II)yrinate a,c-diamide from precorrin-2 (aerobic route): step 5/10. In terms of biological role, catalyzes the methylation of C-1 in precorrin-5 and the subsequent extrusion of acetic acid from the resulting intermediate to form cobalt-precorrin-6A. The protein is Precorrin-6A synthase [deacetylating] (cobF) of Sinorhizobium sp.